Reading from the N-terminus, the 353-residue chain is Photosystem II D2 protein (353 aa).

Thr2 carries the N-acetylthreonine modification. Thr2 is subject to Phosphothreonine. Residues 41–61 (CAYFALGGWFTGTTFVTSWYT) form a helical membrane-spanning segment. His118 lines the chlorophyll a pocket. The chain crosses the membrane as a helical span at residues 125–141 (GFMLRQFELARSVQLRP). Pheophytin a is bound by residues Gln130 and Asn143. The helical transmembrane segment at 153 to 166 (VFVSVFLIYPLGQS) threads the bilayer. A chlorophyll a-binding site is contributed by His198. Residues 208–228 (AALLCAIHGATVENTLFEDGD) traverse the membrane as a helical segment. The a plastoquinone site is built by His215 and Phe262. Position 215 (His215) interacts with Fe cation. His269 serves as a coordination point for Fe cation. The chain crosses the membrane as a helical span at residues 279 to 295 (GLWMSALGVVGLALNLR).

It belongs to the reaction center PufL/M/PsbA/D family. PSII is composed of 1 copy each of membrane proteins PsbA, PsbB, PsbC, PsbD, PsbE, PsbF, PsbH, PsbI, PsbJ, PsbK, PsbL, PsbM, PsbT, PsbX, PsbY, PsbZ, Psb30/Ycf12, at least 3 peripheral proteins of the oxygen-evolving complex and a large number of cofactors. It forms dimeric complexes. The D1/D2 heterodimer binds P680, chlorophylls that are the primary electron donor of PSII, and subsequent electron acceptors. It shares a non-heme iron and each subunit binds pheophytin, quinone, additional chlorophylls, carotenoids and lipids. There is also a Cl(-1) ion associated with D1 and D2, which is required for oxygen evolution. The PSII complex binds additional chlorophylls, carotenoids and specific lipids. is required as a cofactor.

The protein resides in the plastid. It is found in the chloroplast thylakoid membrane. The enzyme catalyses 2 a plastoquinone + 4 hnu + 2 H2O = 2 a plastoquinol + O2. In terms of biological role, photosystem II (PSII) is a light-driven water:plastoquinone oxidoreductase that uses light energy to abstract electrons from H(2)O, generating O(2) and a proton gradient subsequently used for ATP formation. It consists of a core antenna complex that captures photons, and an electron transfer chain that converts photonic excitation into a charge separation. The D1/D2 (PsbA/PsbD) reaction center heterodimer binds P680, the primary electron donor of PSII as well as several subsequent electron acceptors. D2 is needed for assembly of a stable PSII complex. This chain is Photosystem II D2 protein, found in Phaseolus vulgaris (Kidney bean).